The primary structure comprises 98 residues: ACNDLCGPCGPTPLANSCNEPCVRQCEASRVVIQPSTVVVTLPGPILSSFPQSTAVGGSASSSVGNELLASQGVPYFGGGFGLGGLGCFSGRRGCYPC.

N-acetylalanine is present on A1.

This sequence belongs to the avian keratin family. As to quaternary structure, the avian keratins (F-ker, S-ker, C-ker and B-ker) are a complex mixture of very similar polypeptides.

This Chroicocephalus novaehollandiae (Silver gull) protein is Feather keratin.